A 325-amino-acid polypeptide reads, in one-letter code: Casein kinase I isoform alpha (325 aa).

Position 2 is an N-acetylalanine (A2). The residue at position 4 (S4) is a Phosphoserine. Position 8 is an N6-acetyllysine (K8). Residues 17-285 enclose the Protein kinase domain; that stretch reads YKLVRKIGSG…YLRQLFRILF (269 aa). ATP is bound by residues 23-31 and K46; that span reads IGSGSFGDI. Catalysis depends on D136, which acts as the Proton acceptor.

The protein belongs to the protein kinase superfamily. CK1 Ser/Thr protein kinase family. Casein kinase I subfamily. In terms of assembly, interacts with the Axin complex. Interacts with TUT1, leading to TUT1 phosphorylation. Interacts with FAM83A, FAM83B, FAM83C, FAM83D, FAM83E, FAM83F, FAM83G and FAM83H (via DUF1669). Interaction with FAM83H recruits CSNK1A1 to keratin filaments. In terms of processing, phosphorylated by MTOR in response to mitogenic stimulation, leading to its activation.

The protein localises to the cytoplasm. It is found in the cytoskeleton. Its subcellular location is the microtubule organizing center. The protein resides in the centrosome. It localises to the chromosome. The protein localises to the centromere. It is found in the kinetochore. Its subcellular location is the nucleus speckle. The protein resides in the cilium basal body. It localises to the spindle. The catalysed reaction is L-seryl-[protein] + ATP = O-phospho-L-seryl-[protein] + ADP + H(+). It carries out the reaction L-threonyl-[protein] + ATP = O-phospho-L-threonyl-[protein] + ADP + H(+). Its function is as follows. Casein kinases are operationally defined by their preferential utilization of acidic proteins such as caseins as substrates. Can phosphorylate a large number of proteins. Participates in Wnt signaling. Phosphorylates CTNNB1 at 'Ser-45'. May phosphorylate PER1 and PER2. May play a role in segregating chromosomes during mitosis. May play a role in keratin cytoskeleton disassembly and thereby, it may regulate epithelial cell migration. Acts as a positive regulator of mTORC1 and mTORC2 signaling in response to nutrients by mediating phosphorylation of DEPTOR inhibitor. Acts as an inhibitor of NLRP3 inflammasome assembly by mediating phosphorylation of NLRP3. This is Casein kinase I isoform alpha (CSNK1A1) from Oryctolagus cuniculus (Rabbit).